A 289-amino-acid polypeptide reads, in one-letter code: MELTRVTAFCPGHISGYFLPVIHDDPDLSGSIGAGIVISEGVRVIAEKSADSTVKIFQTDRYGLPEEIAESSPVLMDLLAYMQVNASIETFCHLPIGSGYGMSAAALLGTVHALNALYNFHLSPRECARIAHRIEVQHQSGLGDISACQGGGFVIRKTPGPDGDIMRVIDTRPIYALTISPIKTSSVLSSHDMIAQITQSFPSRIPQNLDDIMSLSREFAEKSGLISKEIRTVLTACDKENLPASMTMLGCGVFALGKRAETVLKKFGEVFKLTISPGGPAILFGERSS.

Belongs to the GHMP kinase family. PoK subfamily.

It carries out the reaction (R)-pantoate + ATP = (R)-4-phosphopantoate + ADP + H(+). The protein operates within cofactor biosynthesis; coenzyme A biosynthesis. Functionally, phosphorylates (R)-pantoate to form (R)-4-phosphopantoate in the CoA biosynthesis pathway. ATP is the best phosphate donor. Can be replaced with UTP, with lower efficiency. This is Pantoate kinase from Methanospirillum hungatei JF-1 (strain ATCC 27890 / DSM 864 / NBRC 100397 / JF-1).